The following is a 562-amino-acid chain: Tripeptidyl-peptidase 1 (562 aa).

Residues 1–19 (MGLQARLLGLLALVIAGKC) form the signal peptide. A propeptide spans 20–194 (TYNPEPDQRW…PEPQQVGTVS (175 aa)) (removed in mature form). A disulfide bridge links cysteine 111 with cysteine 122. The Peptidase S53 domain occupies 198 to 562 (GVTPSVLRQR…PALLKTLLNP (365 aa)). The N-linked (GlcNAc...) asparagine glycan is linked to asparagine 209. An N-linked (GlcNAc...) (high mannose) asparagine glycan is attached at asparagine 221. Catalysis depends on charge relay system residues glutamate 271 and aspartate 275. N-linked (GlcNAc...) asparagine glycans are attached at residues asparagine 285, asparagine 312, and asparagine 442. 2 disulfide bridges follow: cysteine 364-cysteine 525 and cysteine 521-cysteine 536. Residue serine 474 is the Charge relay system of the active site. Ca(2+) is bound by residues aspartate 516 and valine 517. Residues glycine 538, glycine 540, and aspartate 542 each contribute to the Ca(2+) site.

In terms of assembly, monomer. Interacts with CLN5. Interacts with CLN3. Requires Ca(2+) as cofactor. In terms of processing, activated by autocatalytic proteolytical processing upon acidification. N-glycosylation is required for processing and activity.

The protein localises to the lysosome. The protein resides in the melanosome. It carries out the reaction Release of an N-terminal tripeptide from a polypeptide, but also has endopeptidase activity.. In terms of biological role, lysosomal serine protease with tripeptidyl-peptidase I activity. May act as a non-specific lysosomal peptidase which generates tripeptides from the breakdown products produced by lysosomal proteinases. Requires substrates with an unsubstituted N-terminus. The polypeptide is Tripeptidyl-peptidase 1 (Tpp1) (Mus musculus (Mouse)).